We begin with the raw amino-acid sequence, 163 residues long: Urease accessory protein UreE (163 aa).

Belongs to the UreE family.

The protein localises to the cytoplasm. Functionally, involved in urease metallocenter assembly. Binds nickel. Probably functions as a nickel donor during metallocenter assembly. This is Urease accessory protein UreE from Actinomyces naeslundii.